The chain runs to 343 residues: Holliday junction branch migration complex subunit RuvB (343 aa).

The segment at 1–185 (MEQEDFNIRE…FGINLHLEYY (185 aa)) is large ATPase domain (RuvB-L). Residues Leu-24, Arg-25, Gly-66, Lys-69, Thr-70, Thr-71, 132 to 134 (EDY), Arg-175, Tyr-185, and Arg-222 each bind ATP. Thr-70 serves as a coordination point for Mg(2+). The segment at 186–256 (DDDILSNIIR…IAQFALEALN (71 aa)) is small ATPAse domain (RuvB-S). The interval 259-343 (KYGLDEIDNK…YSSQKTLFND (85 aa)) is head domain (RuvB-H). DNA-binding residues include Arg-314 and Arg-319.

Belongs to the RuvB family. In terms of assembly, homohexamer. Forms an RuvA(8)-RuvB(12)-Holliday junction (HJ) complex. HJ DNA is sandwiched between 2 RuvA tetramers; dsDNA enters through RuvA and exits via RuvB. An RuvB hexamer assembles on each DNA strand where it exits the tetramer. Each RuvB hexamer is contacted by two RuvA subunits (via domain III) on 2 adjacent RuvB subunits; this complex drives branch migration. In the full resolvosome a probable DNA-RuvA(4)-RuvB(12)-RuvC(2) complex forms which resolves the HJ.

The protein resides in the cytoplasm. It carries out the reaction ATP + H2O = ADP + phosphate + H(+). Its function is as follows. The RuvA-RuvB-RuvC complex processes Holliday junction (HJ) DNA during genetic recombination and DNA repair, while the RuvA-RuvB complex plays an important role in the rescue of blocked DNA replication forks via replication fork reversal (RFR). RuvA specifically binds to HJ cruciform DNA, conferring on it an open structure. The RuvB hexamer acts as an ATP-dependent pump, pulling dsDNA into and through the RuvAB complex. RuvB forms 2 homohexamers on either side of HJ DNA bound by 1 or 2 RuvA tetramers; 4 subunits per hexamer contact DNA at a time. Coordinated motions by a converter formed by DNA-disengaged RuvB subunits stimulates ATP hydrolysis and nucleotide exchange. Immobilization of the converter enables RuvB to convert the ATP-contained energy into a lever motion, pulling 2 nucleotides of DNA out of the RuvA tetramer per ATP hydrolyzed, thus driving DNA branch migration. The RuvB motors rotate together with the DNA substrate, which together with the progressing nucleotide cycle form the mechanistic basis for DNA recombination by continuous HJ branch migration. Branch migration allows RuvC to scan DNA until it finds its consensus sequence, where it cleaves and resolves cruciform DNA. The protein is Holliday junction branch migration complex subunit RuvB of Bacteroides thetaiotaomicron (strain ATCC 29148 / DSM 2079 / JCM 5827 / CCUG 10774 / NCTC 10582 / VPI-5482 / E50).